The following is a 229-amino-acid chain: Potassium/proton antiporter CemA (229 aa).

A run of 3 helical transmembrane segments spans residues 7 to 27 (LTPF…SLSF), 106 to 126 (LILH…YSIL), and 193 to 213 (LVST…FLFL).

It belongs to the CemA family.

It is found in the plastid. The protein localises to the chloroplast inner membrane. It carries out the reaction K(+)(in) + H(+)(out) = K(+)(out) + H(+)(in). Its function is as follows. Contributes to K(+)/H(+) antiport activity by supporting proton efflux to control proton extrusion and homeostasis in chloroplasts in a light-dependent manner to modulate photosynthesis. Prevents excessive induction of non-photochemical quenching (NPQ) under continuous-light conditions. Indirectly promotes efficient inorganic carbon uptake into chloroplasts. In Illicium oligandrum (Star anise), this protein is Potassium/proton antiporter CemA.